Reading from the N-terminus, the 74-residue chain is Anionic peptide clone 8 (74 aa).

The first 24 residues, M1 to A24, serve as a signal peptide directing secretion.

Belongs to the non-disulfide-bridged peptide (NDBP) superfamily. Long chain multifunctional peptide (group 2) family. Expressed by the venom gland.

The protein resides in the secreted. Its function is as follows. May be an antimicrobial peptide. This is Anionic peptide clone 8 from Tityus costatus (Brazilian scorpion).